The sequence spans 335 residues: D-arabinose 1-dehydrogenase (335 aa).

The active-site Proton donor is the tyrosine 58. Histidine 124 is a binding site for substrate. 221–287 contacts NAD(+); that stretch reads SLLRSQETRQ…VSSMEELKLA (67 aa).

The protein belongs to the aldo/keto reductase family. Aldo/keto reductase 2 subfamily.

The catalysed reaction is D-arabinose + NAD(+) = D-arabinono-1,4-lactone + NADH + H(+). The sequence is that of D-arabinose 1-dehydrogenase (ARA2) from Saccharomyces cerevisiae (strain ATCC 204508 / S288c) (Baker's yeast).